The chain runs to 310 residues: Bifunctional phosphoglucose/phosphomannose isomerase (310 aa).

An SIS domain is found at phenylalanine 22–glutamate 152. Residues glycine 41, serine 42, serine 80, serine 82, threonine 85, and arginine 128 each contribute to the D-fructose 6-phosphate site. Catalysis depends on glutamate 202, which acts as the Proton acceptor. 2 residues coordinate D-fructose 6-phosphate: histidine 218 and lysine 306. The active-site Proton donor is the histidine 218. Lysine 306 functions as the Proton acceptor in the catalytic mechanism.

It belongs to the PGI/PMI family. In terms of assembly, homodimer.

It carries out the reaction alpha-D-glucose 6-phosphate = beta-D-fructose 6-phosphate. The catalysed reaction is D-mannose 6-phosphate = D-fructose 6-phosphate. Inhibited by low concentrations of erythrose 4-phosphate and 6-phosphogluconate. Dual specificity isomerase that catalyzes the isomerization of both glucose-6-phosphate and mannose-6-phosphate to fructose-6-phosphate with similar catalytic efficiency. This is Bifunctional phosphoglucose/phosphomannose isomerase from Thermoplasma acidophilum (strain ATCC 25905 / DSM 1728 / JCM 9062 / NBRC 15155 / AMRC-C165).